Reading from the N-terminus, the 465-residue chain is Myosin-6 (465 aa).

The region spanning 1-35 (ILERGDALLVVQWNIRAFTGVKKWPWMELYFEIEP) is the Myosin motor domain. The stretch at 36 to 465 (LLKSAEAEKE…YRRKLEEAQR (430 aa)) forms a coiled coil. Residues S285 and S334 each carry the phosphoserine modification. At Y456 the chain carries Phosphotyrosine.

As to quaternary structure, muscle myosin is a hexameric protein that consists of 2 heavy chain subunits (MHC), 2 alkali light chain subunits (MLC) and 2 regulatory light chain subunits (MLC-2).

The protein localises to the cytoplasm. It localises to the myofibril. Muscle contraction. This is Myosin-6 (MYH6) from Oryctolagus cuniculus (Rabbit).